We begin with the raw amino-acid sequence, 421 residues long: Alpha-1-antiproteinase 2 (421 aa).

Residues 1-24 (MPSSVPWCLLLLAGLCCLVPSSLA) form the signal peptide. N-linked (GlcNAc...) asparagine glycans are attached at residues Asn-73, Asn-110, and Asn-274. The RCL stretch occupies residues 376-395 (GTTMWEIMPISLPPDLKFNR).

Belongs to the serpin family. In terms of processing, N-glycosylated with carbohydrates having biantennary side chains. Plasma.

It localises to the secreted. In terms of biological role, inhibitor of serine proteases. In Equus caballus (Horse), this protein is Alpha-1-antiproteinase 2.